A 134-amino-acid chain; its full sequence is Ribosome-binding factor A (134 aa).

Belongs to the RbfA family. In terms of assembly, monomer. Binds 30S ribosomal subunits, but not 50S ribosomal subunits or 70S ribosomes.

The protein localises to the cytoplasm. In terms of biological role, one of several proteins that assist in the late maturation steps of the functional core of the 30S ribosomal subunit. Associates with free 30S ribosomal subunits (but not with 30S subunits that are part of 70S ribosomes or polysomes). Required for efficient processing of 16S rRNA. May interact with the 5'-terminal helix region of 16S rRNA. This Cyanothece sp. (strain PCC 7425 / ATCC 29141) protein is Ribosome-binding factor A.